Reading from the N-terminus, the 964-residue chain is Reticulon-3 (964 aa).

The segment covering 1–24 (MAESSAATQSPSVSSSSSGAEPSA) has biased composition (low complexity). Disordered stretches follow at residues 1–32 (MAESSAATQSPSVSSSSSGAEPSALGGGGGSP), 68–109 (AGLS…SETL), and 179–200 (WVVKDQEPKNPNKVPDGEDRSA). Residue alanine 2 is modified to N-acetylalanine. The Cytoplasmic segment spans residues 2 to 795 (AESSAATQSP…KKTGFVFGTT (794 aa)). Serine 31 is modified (phosphoserine). The segment covering 80–91 (SKSMTSSFLSSS) has biased composition (low complexity). Phosphoserine occurs at positions 217, 225, 230, 233, 270, 303, and 429. The segment at 479–536 (ITEKPDSLPSAAAKTSEREIKETPSRETVRSEMCENSEQPQAQPETPTQKSLEGEVAS) is disordered. The segment covering 493–511 (TSEREIKETPSRETVRSEM) has biased composition (basic and acidic residues). Residues 516–527 (EQPQAQPETPTQ) are compositionally biased toward low complexity. Phosphoserine is present on serine 529. The residue at position 593 (threonine 593) is a Phosphothreonine. Phosphoserine occurs at positions 596, 597, and 673. Disordered stretches follow at residues 645 to 674 (ELSGSETKNIKSKYSEDSRETTGGAPTMSP) and 697 to 723 (VQDEGISSGGKLKQTFAPQSGPQSSSD). The span at 712–723 (FAPQSGPQSSSD) shows a compositional bias: polar residues. The region spanning 776-964 (VHDLIFWRDV…LPGIAKKKAE (189 aa)) is the Reticulon domain. The segment at residues 796–819 (LIMLLSLAAFSVISVVSYLILALL) is an intramembrane region (helical). Residues 820–876 (SVTISFRVYKSVIQAVQKSEEGHPFKAYLDVDITLSSEAFHNYMNAAMVHVNKALKL) are Cytoplasmic-facing. The segment at residues 877 to 899 (IIRLFLVEDLVDSLKLAVFMWLM) is an intramembrane region (helical). The Cytoplasmic segment spans residues 900-903 (TYVG). The helical intramembrane region spans 904–926 (AVFNGITLLILAELLVFSVPIVY). Residues 919–964 (VFSVPIVYEKYKTQIDHYVGIARDQTKSIVEKIQAKLPGIAKKKAE) form an interaction with FADD region. Over 927 to 964 (EKYKTQIDHYVGIARDQTKSIVEKIQAKLPGIAKKKAE) the chain is Cytoplasmic. An interaction with BACE1 region spans residues 932–934 (QID).

As to quaternary structure, homodimer. Interacts with RTN4. Isoform 3 interacts with BACE1, BACE2, BCL2 and FADD. Interacts with ATL1 and ATL2. Isoform 3 interacts with TMEM33. Interacts with ZFYVE27 and with KIF5A in a ZFYVE27-dependent manner. Interacts with RIGI. Interacts with TRIM25. As to expression, isoform 1, isoform 3, isoform 4 and isoform 5 are expressed in spinal cord. Isoform 1 is present in brain, where it is expressed in the neurons of cerebral cortex, hippocampus, hypothalamus and cerebellum (at protein level).

It is found in the endoplasmic reticulum membrane. The protein localises to the golgi apparatus membrane. Its function is as follows. May be involved in membrane trafficking in the early secretory pathway. Inhibits BACE1 activity and amyloid precursor protein processing. May induce caspase-8 cascade and apoptosis. May favor BCL2 translocation to the mitochondria upon endoplasmic reticulum stress. Induces the formation of endoplasmic reticulum tubules. Also acts as an inflammation-resolving regulator by interacting with both TRIM25 and RIGI, subsequently impairing RIGI 'Lys-63'-linked polyubiquitination leading to IRF3 and NF-kappa-B inhibition. The protein is Reticulon-3 (Rtn3) of Mus musculus (Mouse).